Here is a 140-residue protein sequence, read N- to C-terminus: Large ribosomal subunit protein uL11 (140 aa).

This sequence belongs to the universal ribosomal protein uL11 family. Part of the ribosomal stalk of the 50S ribosomal subunit. Interacts with L10 and the large rRNA to form the base of the stalk. L10 forms an elongated spine to which L12 dimers bind in a sequential fashion forming a multimeric L10(L12)X complex. Post-translationally, one or more lysine residues are methylated.

Functionally, forms part of the ribosomal stalk which helps the ribosome interact with GTP-bound translation factors. The sequence is that of Large ribosomal subunit protein uL11 from Nitratidesulfovibrio vulgaris (strain DSM 19637 / Miyazaki F) (Desulfovibrio vulgaris).